The primary structure comprises 247 residues: Geranylgeranylglyceryl phosphate synthase (247 aa).

Mg(2+)-binding residues include aspartate 24 and serine 53. Sn-glycerol 1-phosphate-binding positions include 172–178 (YLEAGSG), 203–204 (GG), and 225–226 (GT).

Belongs to the GGGP/HepGP synthase family. Group II subfamily. Mg(2+) is required as a cofactor.

It localises to the cytoplasm. It catalyses the reaction sn-glycerol 1-phosphate + (2E,6E,10E)-geranylgeranyl diphosphate = sn-3-O-(geranylgeranyl)glycerol 1-phosphate + diphosphate. Its pathway is membrane lipid metabolism; glycerophospholipid metabolism. Prenyltransferase that catalyzes the transfer of the geranylgeranyl moiety of geranylgeranyl diphosphate (GGPP) to the C3 hydroxyl of sn-glycerol-1-phosphate (G1P). This reaction is the first ether-bond-formation step in the biosynthesis of archaeal membrane lipids. This is Geranylgeranylglyceryl phosphate synthase from Cenarchaeum symbiosum (strain A).